The sequence spans 64 residues: Putative neurotoxin-H (64 aa).

An N-terminal signal peptide occupies residues 1 to 19; the sequence is MYATVTVTVLLLISSGIFC. Intrachain disulfides connect Cys-25/Cys-45, Cys-32/Cys-54, and Cys-36/Cys-56.

In terms of tissue distribution, expressed by the venom gland.

The protein resides in the secreted. This Lychas mucronatus (Chinese swimming scorpion) protein is Putative neurotoxin-H.